Consider the following 346-residue polypeptide: MIKISIDAMGGDFGPEVVIPGAAKAFERHPDIRFIFFGLPAQVEPVLARYPKLKEASEFRASEVAIGMDDKPSQALRAGRGKSSMWQAIEAVKTGDADACVSAGNTGALMAMSKFCLRMMSDVERPAIAGIWPTLRGESIVLDIGATIGADARQLVDYAVMGAGMARALFEVRKPTVGLLNVGTEEVKGLDEIKEAGQILRDTPLDGLEYSGFVEGNDIGKGTVDAVVTEGFTGNIALKTAEGTARQMAELLRQAMSRTLLAKIGYVFAKGAFDRLREKMDPNKVNGGVFLGLSGIVIKSHGGANAEGFCSAVEVGYDMVRNRLLEKIEADLAHFHHSHSHVSSKA.

The protein belongs to the PlsX family. As to quaternary structure, homodimer. Probably interacts with PlsY.

The protein localises to the cytoplasm. The enzyme catalyses a fatty acyl-[ACP] + phosphate = an acyl phosphate + holo-[ACP]. Its pathway is lipid metabolism; phospholipid metabolism. Its function is as follows. Catalyzes the reversible formation of acyl-phosphate (acyl-PO(4)) from acyl-[acyl-carrier-protein] (acyl-ACP). This enzyme utilizes acyl-ACP as fatty acyl donor, but not acyl-CoA. This Brucella melitensis biotype 2 (strain ATCC 23457) protein is Phosphate acyltransferase.